Consider the following 141-residue polypeptide: Nucleoside diphosphate kinase (141 aa).

ATP-binding residues include K11, F59, R87, T93, R104, and N114. Residue H117 is the Pros-phosphohistidine intermediate of the active site.

This sequence belongs to the NDK family. As to quaternary structure, homotetramer. The cofactor is Mg(2+).

The protein resides in the cytoplasm. It catalyses the reaction a 2'-deoxyribonucleoside 5'-diphosphate + ATP = a 2'-deoxyribonucleoside 5'-triphosphate + ADP. It carries out the reaction a ribonucleoside 5'-diphosphate + ATP = a ribonucleoside 5'-triphosphate + ADP. Its function is as follows. Major role in the synthesis of nucleoside triphosphates other than ATP. The ATP gamma phosphate is transferred to the NDP beta phosphate via a ping-pong mechanism, using a phosphorylated active-site intermediate. This chain is Nucleoside diphosphate kinase, found in Haemophilus influenzae (strain 86-028NP).